The sequence spans 188 residues: Pyridoxal 5'-phosphate synthase subunit PdxT (188 aa).

Residue 47-49 (GES) coordinates L-glutamine. The active-site Nucleophile is the cysteine 79. L-glutamine-binding positions include arginine 105 and 134–135 (IR). Catalysis depends on charge relay system residues histidine 170 and glutamate 172.

It belongs to the glutaminase PdxT/SNO family. In terms of assembly, in the presence of PdxS, forms a dodecamer of heterodimers. Only shows activity in the heterodimer.

It carries out the reaction aldehydo-D-ribose 5-phosphate + D-glyceraldehyde 3-phosphate + L-glutamine = pyridoxal 5'-phosphate + L-glutamate + phosphate + 3 H2O + H(+). The catalysed reaction is L-glutamine + H2O = L-glutamate + NH4(+). The protein operates within cofactor biosynthesis; pyridoxal 5'-phosphate biosynthesis. In terms of biological role, catalyzes the hydrolysis of glutamine to glutamate and ammonia as part of the biosynthesis of pyridoxal 5'-phosphate. The resulting ammonia molecule is channeled to the active site of PdxS. The polypeptide is Pyridoxal 5'-phosphate synthase subunit PdxT (Listeria innocua serovar 6a (strain ATCC BAA-680 / CLIP 11262)).